A 209-amino-acid polypeptide reads, in one-letter code: Large ribosomal subunit protein uL3 (209 aa).

Gln-150 carries the post-translational modification N5-methylglutamine.

This sequence belongs to the universal ribosomal protein uL3 family. Part of the 50S ribosomal subunit. Forms a cluster with proteins L14 and L19. In terms of processing, methylated by PrmB.

Its function is as follows. One of the primary rRNA binding proteins, it binds directly near the 3'-end of the 23S rRNA, where it nucleates assembly of the 50S subunit. This chain is Large ribosomal subunit protein uL3, found in Vibrio parahaemolyticus serotype O3:K6 (strain RIMD 2210633).